Here is a 498-residue protein sequence, read N- to C-terminus: Ribose import ATP-binding protein RbsA 1 (498 aa).

ABC transporter domains are found at residues 7–243 and 254–496; these read LHIQ…VGRR and PRGE…IGKS. An ATP-binding site is contributed by 39–46; that stretch reads GENGAGKS.

Belongs to the ABC transporter superfamily. Ribose importer (TC 3.A.1.2.1) family. The complex is composed of an ATP-binding protein (RbsA), two transmembrane proteins (RbsC) and a solute-binding protein (RbsB).

It is found in the cell inner membrane. It catalyses the reaction D-ribose(out) + ATP + H2O = D-ribose(in) + ADP + phosphate + H(+). Part of the ABC transporter complex RbsABC involved in ribose import. Responsible for energy coupling to the transport system. In Pasteurella multocida (strain Pm70), this protein is Ribose import ATP-binding protein RbsA 1.